We begin with the raw amino-acid sequence, 234 residues long: MSAITVGVVVFPGSNCDHDTAYALASFAGVKPVMLWHNNHDLQGAQAIVLPGGFSYGDYLRAGAIARFSPLMKEVVEFARKGYPVLGICNGFQVLLESGLLEGALSRNRDKKFLCCQTTITPVNCSTRFTEDYHQGEVLRIPIAHGEGNYFAPPEVLESLQEHNQIAFQYCNAQGEVTVEANPNGSLLNIAGIVNRAGNVLGLMPHPERASDAALGSVDGRLLFESLFRSLTGV.

Residues 6–234 (VGVVVFPGSN…ESLFRSLTGV (229 aa)) form the Glutamine amidotransferase type-1 domain. C89 (nucleophile) is an active-site residue. Catalysis depends on residues H206 and E208.

In terms of assembly, part of the FGAM synthase complex composed of 1 PurL, 1 PurQ and 2 PurS subunits.

The protein localises to the cytoplasm. It carries out the reaction N(2)-formyl-N(1)-(5-phospho-beta-D-ribosyl)glycinamide + L-glutamine + ATP + H2O = 2-formamido-N(1)-(5-O-phospho-beta-D-ribosyl)acetamidine + L-glutamate + ADP + phosphate + H(+). The enzyme catalyses L-glutamine + H2O = L-glutamate + NH4(+). Its pathway is purine metabolism; IMP biosynthesis via de novo pathway; 5-amino-1-(5-phospho-D-ribosyl)imidazole from N(2)-formyl-N(1)-(5-phospho-D-ribosyl)glycinamide: step 1/2. Its function is as follows. Part of the phosphoribosylformylglycinamidine synthase complex involved in the purines biosynthetic pathway. Catalyzes the ATP-dependent conversion of formylglycinamide ribonucleotide (FGAR) and glutamine to yield formylglycinamidine ribonucleotide (FGAM) and glutamate. The FGAM synthase complex is composed of three subunits. PurQ produces an ammonia molecule by converting glutamine to glutamate. PurL transfers the ammonia molecule to FGAR to form FGAM in an ATP-dependent manner. PurS interacts with PurQ and PurL and is thought to assist in the transfer of the ammonia molecule from PurQ to PurL. This Chlorobium chlorochromatii (strain CaD3) protein is Phosphoribosylformylglycinamidine synthase subunit PurQ.